Here is a 426-residue protein sequence, read N- to C-terminus: Gamma-glutamyl phosphate reductase (426 aa).

It belongs to the gamma-glutamyl phosphate reductase family.

The protein localises to the cytoplasm. The enzyme catalyses L-glutamate 5-semialdehyde + phosphate + NADP(+) = L-glutamyl 5-phosphate + NADPH + H(+). The protein operates within amino-acid biosynthesis; L-proline biosynthesis; L-glutamate 5-semialdehyde from L-glutamate: step 2/2. In terms of biological role, catalyzes the NADPH-dependent reduction of L-glutamate 5-phosphate into L-glutamate 5-semialdehyde and phosphate. The product spontaneously undergoes cyclization to form 1-pyrroline-5-carboxylate. This Deinococcus geothermalis (strain DSM 11300 / CIP 105573 / AG-3a) protein is Gamma-glutamyl phosphate reductase.